Reading from the N-terminus, the 257-residue chain is 5'-nucleotidase SurE (257 aa).

Residues Asp-13, Asp-14, Ser-44, and Asn-100 each coordinate a divalent metal cation.

The protein belongs to the SurE nucleotidase family. A divalent metal cation serves as cofactor.

Its subcellular location is the cytoplasm. The catalysed reaction is a ribonucleoside 5'-phosphate + H2O = a ribonucleoside + phosphate. Its function is as follows. Nucleotidase that shows phosphatase activity on nucleoside 5'-monophosphates. This Phocaeicola vulgatus (strain ATCC 8482 / DSM 1447 / JCM 5826 / CCUG 4940 / NBRC 14291 / NCTC 11154) (Bacteroides vulgatus) protein is 5'-nucleotidase SurE.